The sequence spans 118 residues: Holo-[acyl-carrier-protein] synthase (118 aa).

The Mg(2+) site is built by Asp8 and Glu58.

It belongs to the P-Pant transferase superfamily. AcpS family. It depends on Mg(2+) as a cofactor.

It is found in the cytoplasm. The catalysed reaction is apo-[ACP] + CoA = holo-[ACP] + adenosine 3',5'-bisphosphate + H(+). Its function is as follows. Transfers the 4'-phosphopantetheine moiety from coenzyme A to a Ser of acyl-carrier-protein. This is Holo-[acyl-carrier-protein] synthase from Streptococcus pyogenes serotype M28 (strain MGAS6180).